Reading from the N-terminus, the 650-residue chain is Histone-lysine N-methyltransferase family member SUVH9 (650 aa).

Disordered stretches follow at residues methionine 1–proline 24 and proline 95–glutamate 129. The span at proline 7 to proline 20 shows a compositional bias: low complexity. Residues tyrosine 107–threonine 118 show a composition bias toward polar residues. Positions glycine 205 to arginine 352 constitute a YDG domain. Positions serine 432 to glycine 490 constitute a Pre-SET domain. 9 residues coordinate Zn(2+): cysteine 434, cysteine 436, cysteine 440, cysteine 444, cysteine 446, cysteine 472, cysteine 476, cysteine 478, and cysteine 482. In terms of domain architecture, SET spans asparagine 493–glycine 637.

The protein belongs to the class V-like SAM-binding methyltransferase superfamily. Histone-lysine methyltransferase family. Suvar3-9 subfamily. Component of an RNA-directed DNA methylation (RdDM) complex that contains at least MORC6, MORC1/CRT1, MORC2, SWI3D and SUVH9. Interacts directly with MORC6, MORC2 and MORC1/CRT1. Interacts with SWI3B, SWI3C and SWI3D.

Its subcellular location is the nucleus. The protein resides in the chromosome. It localises to the centromere. Functionally, histone methyltransferase family member that plays a role in gene silencing. Together with MORC6 and SUVH2, regulates the silencing of some transposable elements (TEs). According to PubMed:19043555, the protein does not bind S-adenosyl-L-methionine and lacks methyltransferase activity. Instead, it may function downstream of DRM2 in RNA-directed DNA methylation, binding to methylated DNA and recruiting DNA-directed RNA polymerase V to chromatin. The sequence is that of Histone-lysine N-methyltransferase family member SUVH9 (SUVH9) from Arabidopsis thaliana (Mouse-ear cress).